Reading from the N-terminus, the 247-residue chain is 1-(5-phosphoribosyl)-5-[(5-phosphoribosylamino)methylideneamino] imidazole-4-carboxamide isomerase (247 aa).

The Proton acceptor role is filled by Asp8. The active-site Proton donor is Asp131.

Belongs to the HisA/HisF family.

It is found in the cytoplasm. It carries out the reaction 1-(5-phospho-beta-D-ribosyl)-5-[(5-phospho-beta-D-ribosylamino)methylideneamino]imidazole-4-carboxamide = 5-[(5-phospho-1-deoxy-D-ribulos-1-ylimino)methylamino]-1-(5-phospho-beta-D-ribosyl)imidazole-4-carboxamide. Its pathway is amino-acid biosynthesis; L-histidine biosynthesis; L-histidine from 5-phospho-alpha-D-ribose 1-diphosphate: step 4/9. This chain is 1-(5-phosphoribosyl)-5-[(5-phosphoribosylamino)methylideneamino] imidazole-4-carboxamide isomerase, found in Cupriavidus metallidurans (strain ATCC 43123 / DSM 2839 / NBRC 102507 / CH34) (Ralstonia metallidurans).